The chain runs to 310 residues: Vomeronasal type-1 receptor 97 (310 aa).

At 1 to 19 the chain is on the extracellular side; that stretch reads MNKDNILHTDTNIKITLFS. A helical membrane pass occupies residues 20-40; that stretch reads EVSIGISANSALFFSHLFMLF. Residues 41–49 are Cytoplasmic-facing; the sequence is EKNRSKPID. A helical transmembrane segment spans residues 50–70; that stretch reads LYIAFLSLTQLMLLITIGLIA. Residues 71–93 are Extracellular-facing; sequence ADMFMSRGRWDSTTCQSLIYLHR. A disulfide bridge connects residues cysteine 85 and cysteine 172. A helical transmembrane segment spans residues 94–114; that stretch reads LLRGFTLCATCLLNVLWTITL. Residues 115 to 131 lie on the Cytoplasmic side of the membrane; sequence SPRSSCLTTFKHKSPHH. A helical membrane pass occupies residues 132-152; it reads ISGAFLFFCVLYISFGSHLFL. At 153-190 the chain is on the extracellular side; it reads STIATPNLTSDNFMYVTQSCSFLPMSYSRTSMFSTPMA. N-linked (GlcNAc...) asparagine glycosylation occurs at asparagine 159. The helical transmembrane segment at 191–211 threads the bilayer; the sequence is IREALLIGLIGLSSGYMVAFL. Topologically, residues 212 to 238 are cytoplasmic; sequence WRHKNQARHLHSTSLSSKVSPEQRATR. The chain crosses the membrane as a helical span at residues 239-259; it reads TIMILMSFFVVLYILENVVFY. The Extracellular segment spans residues 260 to 269; it reads SRMTFKDGSM. The chain crosses the membrane as a helical span at residues 270–290; sequence FYCVQIIVSHSYATISPFVFI. The Cytoplasmic portion of the chain corresponds to 291–310; it reads CTEKRIIKLWGSMSSRIVSI.

This sequence belongs to the G-protein coupled receptor 1 family. In terms of tissue distribution, expressed in 1-4% of neurons of the vomeronasal organ. Only one pheromone receptor gene may be expressed in a particular neuron. Not expressed in the main olfactory epithelium.

It localises to the cell membrane. Putative pheromone receptor implicated in the regulation of social as well as reproductive behavior. The sequence is that of Vomeronasal type-1 receptor 97 (Vom1r97) from Rattus norvegicus (Rat).